The following is a 982-amino-acid chain: Polyribonucleotide nucleotidyltransferase 2, mitochondrial (982 aa).

The transit peptide at 1–39 directs the protein to the mitochondrion; the sequence is MSMAVASLRLLARGGRRRARFPAPLSVPGGRAAFLSGAA. The KH domain maps to 624 to 678; that stretch reads PRLATLSFSSDSLRKLLFHRKKIEQETGARVSVSDGTVTIVAKTQPIMDKAIEKV. One can recognise an S1 motif 1 domain in the interval 689-757; it reads GRTYKGVVSS…LRGNIKLSLK (69 aa). 2 disordered regions span residues 792–814 and 832–892; these read PSKD…EETP and QDVT…NDVL. 2 stretches are compositionally biased toward low complexity: residues 846-855 and 868-877; these read AKSSPKLSKP and KKTSGASTTA. The 63-residue stretch at 920 to 982 folds into the S1 motif 2 domain; the sequence is GDVVTAKVYQ…KGIPVFSLLD (63 aa).

This sequence belongs to the polyribonucleotide nucleotidyltransferase family.

It is found in the mitochondrion. It carries out the reaction RNA(n+1) + phosphate = RNA(n) + a ribonucleoside 5'-diphosphate. In terms of biological role, involved in the 3'-end maturation of mitochondrial mRNAs, rRNAs and tRNAs. Functions as a poly(A) mRNA 3'-5' degrading phosphorylase. The chain is Polyribonucleotide nucleotidyltransferase 2, mitochondrial (PNP2) from Oryza sativa subsp. japonica (Rice).